Reading from the N-terminus, the 65-residue chain is Large ribosomal subunit protein bL35 (65 aa).

Residues 1-16 (MPKMKTKSGAKKRFRV) show a composition bias toward basic residues. Positions 1 to 25 (MPKMKTKSGAKKRFRVRPGGTVKRG) are disordered.

This sequence belongs to the bacterial ribosomal protein bL35 family.

The chain is Large ribosomal subunit protein bL35 from Herminiimonas arsenicoxydans.